Reading from the N-terminus, the 235-residue chain is Regulator of G-protein signaling 18 (235 aa).

Ser49 is modified (phosphoserine). One can recognise an RGS domain in the interval 86–202 (SFDKLLSHRD…LKSEIYLHLI (117 aa)). Phosphoserine occurs at positions 216 and 218.

It localises to the cytoplasm. Its function is as follows. Inhibits signal transduction by increasing the GTPase activity of G protein alpha subunits thereby driving them into their inactive GDP-bound form. Binds to G(i) alpha-1, G(i) alpha-2, G(i) alpha-3 and G(q) alpha. This is Regulator of G-protein signaling 18 (Rgs18) from Rattus norvegicus (Rat).